We begin with the raw amino-acid sequence, 302 residues long: Acetyl-coenzyme A carboxylase carboxyl transferase subunit beta (302 aa).

A CoA carboxyltransferase N-terminal domain is found at 25-294; sequence VWTKCDSCGQ…PQEDIVTEAA (270 aa). Zn(2+) is bound by residues Cys-29, Cys-32, Cys-48, and Cys-51. The C4-type zinc-finger motif lies at 29–51; the sequence is CDSCGQVLYRAELERNLEVCPKC.

Belongs to the AccD/PCCB family. Acetyl-CoA carboxylase is a heterohexamer composed of biotin carboxyl carrier protein (AccB), biotin carboxylase (AccC) and two subunits each of ACCase subunit alpha (AccA) and ACCase subunit beta (AccD). The cofactor is Zn(2+).

Its subcellular location is the cytoplasm. It catalyses the reaction N(6)-carboxybiotinyl-L-lysyl-[protein] + acetyl-CoA = N(6)-biotinyl-L-lysyl-[protein] + malonyl-CoA. It participates in lipid metabolism; malonyl-CoA biosynthesis; malonyl-CoA from acetyl-CoA: step 1/1. Its function is as follows. Component of the acetyl coenzyme A carboxylase (ACC) complex. Biotin carboxylase (BC) catalyzes the carboxylation of biotin on its carrier protein (BCCP) and then the CO(2) group is transferred by the transcarboxylase to acetyl-CoA to form malonyl-CoA. This chain is Acetyl-coenzyme A carboxylase carboxyl transferase subunit beta, found in Erwinia tasmaniensis (strain DSM 17950 / CFBP 7177 / CIP 109463 / NCPPB 4357 / Et1/99).